The following is a 286-amino-acid chain: Transcription factor bHLH137 (286 aa).

Residues 63–84 (SGSEKLANTTKTATTGSSSCDQ) are compositionally biased toward polar residues. Residues 63-149 (SGSEKLANTT…RGQATDSHSL (87 aa)) are disordered. The region spanning 142–192 (QATDSHSLAERVRREKISERMRTLQNLVPGCDKVTGKALMLDEIINYVQTL) is the bHLH domain.

Homodimer.

It localises to the nucleus. The sequence is that of Transcription factor bHLH137 (BHLH137) from Arabidopsis thaliana (Mouse-ear cress).